The primary structure comprises 126 residues: Glycine cleavage system H protein (126 aa).

The region spanning 22–104 (VAYVGITDYA…YGKGWLIKIS (83 aa)) is the Lipoyl-binding domain. Lys-63 carries the post-translational modification N6-lipoyllysine.

Belongs to the GcvH family. As to quaternary structure, the glycine cleavage system is composed of four proteins: P, T, L and H. It depends on (R)-lipoate as a cofactor.

The glycine cleavage system catalyzes the degradation of glycine. The H protein shuttles the methylamine group of glycine from the P protein to the T protein. This Parabacteroides distasonis (strain ATCC 8503 / DSM 20701 / CIP 104284 / JCM 5825 / NCTC 11152) protein is Glycine cleavage system H protein.